The following is a 574-amino-acid chain: MYND-type zinc finger protein C31F10.10c (574 aa).

2 disordered regions span residues 207-253 (DSGD…QDPR) and 283-307 (MTTP…DEID). Composition is skewed to polar residues over residues 243–253 (IYSNDSFQDPR) and 283–301 (MTTP…ASET). The MYND-type; degenerate zinc finger occupies 482–523 (NLLCNKWEEHSRQFAKCRRCRRTKYCSKECQHQAWPGHSRWC). Zn(2+) is bound by residues Cys498, Cys501, His519, and Cys523. Positions 534 to 574 (KRESSKINSVTESESTASPAASVIPVGTESVTSSTQSDSRL) are disordered. The span at 542–556 (SVTESESTASPAASV) shows a compositional bias: low complexity. Residues 562–574 (ESVTSSTQSDSRL) show a composition bias toward polar residues.

The protein belongs to the MUB1/samB family.

Its subcellular location is the nucleus. The protein localises to the cytoplasm. It localises to the cytoskeleton. The protein resides in the microtubule organizing center. It is found in the spindle pole body. The sequence is that of MYND-type zinc finger protein C31F10.10c from Schizosaccharomyces pombe (strain 972 / ATCC 24843) (Fission yeast).